A 332-amino-acid chain; its full sequence is ALQYKGVDWSSVMVEERAGVRYKNVNGQEKPLEYILAENGVNMVRQRVWVNPWDGNYNLDYNIQLARRAKAAGLGLYINFHYSDTWADPAHQTTPAGWPSDINNLAWKLYNYTLDSMNRFADAGIQVDIVSIGNEITQGLLWPLGKTNNWYNIARLLHSAAWGVKDSRLNPKPKIMVHLDNGWNWDTQNWWYTNVLSQGPFEMSDFDMMGVSFYPFYSASATLDSLRRSLNNMVSRWGKEVAVVETNWPTSCPYPRYQFPADVRNVPFSAAGQTQYIQSVANVVSSVSKGVGLFYWEPAWIHNANLGSSCADNTMFTPSGQALSSLSVFHRI.

Asparagine 111 is a glycosylation site (N-linked (GlcNAc...) asparagine). Glutamate 135 (proton donor) is an active-site residue. Glutamate 245 functions as the Nucleophile in the catalytic mechanism.

The protein belongs to the glycosyl hydrolase 53 family.

The catalysed reaction is The enzyme specifically hydrolyzes (1-&gt;4)-beta-D-galactosidic linkages in type I arabinogalactans.. The chain is Arabinogalactan endo-beta-1,4-galactanase from Humicola insolens (Soft-rot fungus).